A 735-amino-acid polypeptide reads, in one-letter code: Rho GTPase-activating protein SYDE1 (735 aa).

Disordered regions lie at residues 1 to 253 (MAEP…PYEV), 601 to 655 (PDTR…AGDW), and 669 to 706 (FLSG…FDAP). Residues 14–47 (RGREKLPRKKSDAKDRGRPAQRSEPKPPEPEPRV) are compositionally biased toward basic and acidic residues. The segment covering 151 to 160 (PTKTSRTKSP) has biased composition (low complexity). Ser224, Ser231, Ser235, and Ser244 each carry phosphoserine. The C2 domain occupies 249 to 366 (RPYEVGPSAR…FRGCQAQQLA (118 aa)). The 207-residue stretch at 398–604 (LPLQLLVERE…YLLQSWPDTR (207 aa)) folds into the Rho-GAP domain. Basic and acidic residues predominate over residues 669 to 679 (FLSGPDYDHVT). Ser681 and Ser683 each carry phosphoserine.

Palmitoylated. Probably palmitoylated by ZDHHC3 and ZDHHC7.

In terms of biological role, GTPase activator for the Rho-type GTPases. As a GCM1 downstream effector, it is involved in placental development and positively regulates trophoblast cells migration. It regulates cytoskeletal remodeling by controlling the activity of Rho GTPases including RHOA, CDC42 and RAC1. The protein is Rho GTPase-activating protein SYDE1 (Syde1) of Rattus norvegicus (Rat).